A 284-amino-acid chain; its full sequence is Acetylglutamate kinase (284 aa).

Substrate-binding positions include 64–65, arginine 86, and asparagine 177; that span reads GG.

This sequence belongs to the acetylglutamate kinase family. ArgB subfamily.

Its subcellular location is the cytoplasm. The catalysed reaction is N-acetyl-L-glutamate + ATP = N-acetyl-L-glutamyl 5-phosphate + ADP. Its pathway is amino-acid biosynthesis; L-arginine biosynthesis; N(2)-acetyl-L-ornithine from L-glutamate: step 2/4. Functionally, catalyzes the ATP-dependent phosphorylation of N-acetyl-L-glutamate. In Haemophilus ducreyi (strain 35000HP / ATCC 700724), this protein is Acetylglutamate kinase.